The primary structure comprises 282 residues: Shikimate dehydrogenase (NADP(+)) (282 aa).

Shikimate is bound by residues 15-17 and threonine 62; that span reads SKS. Lysine 66 functions as the Proton acceptor in the catalytic mechanism. Shikimate-binding residues include asparagine 87 and aspartate 103. NADP(+)-binding positions include 127-131, 151-156, and methionine 220; these read GAGGA and NRTHTK. Tyrosine 222 lines the shikimate pocket. NADP(+) is bound at residue glycine 244.

The protein belongs to the shikimate dehydrogenase family. In terms of assembly, homodimer.

The enzyme catalyses shikimate + NADP(+) = 3-dehydroshikimate + NADPH + H(+). It participates in metabolic intermediate biosynthesis; chorismate biosynthesis; chorismate from D-erythrose 4-phosphate and phosphoenolpyruvate: step 4/7. Involved in the biosynthesis of the chorismate, which leads to the biosynthesis of aromatic amino acids. Catalyzes the reversible NADPH linked reduction of 3-dehydroshikimate (DHSA) to yield shikimate (SA). The protein is Shikimate dehydrogenase (NADP(+)) of Shewanella putrefaciens (strain CN-32 / ATCC BAA-453).